Reading from the N-terminus, the 115-residue chain is Insulin (115 aa).

Positions 1–22 (MAALWLQSVSLLVLMLVSWSGS) are cleaved as a signal peptide. 3 cysteine pairs are disulfide-bonded: C32/C101, C44/C114, and C100/C105. A propeptide spans 56–92 (DVDPLLGFLPAKSGGAAAGGENEVAEFAFKDQMEMMV) (c peptide).

It belongs to the insulin family. As to quaternary structure, heterodimer of a B chain and an A chain linked by two disulfide bonds.

The protein resides in the secreted. Functionally, insulin decreases blood glucose concentration. It increases cell permeability to monosaccharides, amino acids and fatty acids. It accelerates glycolysis, the pentose phosphate cycle, and glycogen synthesis in liver. The polypeptide is Insulin (ins) (Verasper moseri (Barfin flounder)).